A 367-amino-acid polypeptide reads, in one-letter code: UDP-N-acetylglucosamine--N-acetylmuramyl-(pentapeptide) pyrophosphoryl-undecaprenol N-acetylglucosamine transferase (367 aa).

Residues Thr-22–Gly-24, Asn-134, Arg-170, Ser-198, Ile-253, and Gln-298 contribute to the UDP-N-acetyl-alpha-D-glucosamine site.

It belongs to the glycosyltransferase 28 family. MurG subfamily.

Its subcellular location is the cell inner membrane. The enzyme catalyses di-trans,octa-cis-undecaprenyl diphospho-N-acetyl-alpha-D-muramoyl-L-alanyl-D-glutamyl-meso-2,6-diaminopimeloyl-D-alanyl-D-alanine + UDP-N-acetyl-alpha-D-glucosamine = di-trans,octa-cis-undecaprenyl diphospho-[N-acetyl-alpha-D-glucosaminyl-(1-&gt;4)]-N-acetyl-alpha-D-muramoyl-L-alanyl-D-glutamyl-meso-2,6-diaminopimeloyl-D-alanyl-D-alanine + UDP + H(+). The protein operates within cell wall biogenesis; peptidoglycan biosynthesis. Its function is as follows. Cell wall formation. Catalyzes the transfer of a GlcNAc subunit on undecaprenyl-pyrophosphoryl-MurNAc-pentapeptide (lipid intermediate I) to form undecaprenyl-pyrophosphoryl-MurNAc-(pentapeptide)GlcNAc (lipid intermediate II). This is UDP-N-acetylglucosamine--N-acetylmuramyl-(pentapeptide) pyrophosphoryl-undecaprenol N-acetylglucosamine transferase from Xylella fastidiosa (strain M23).